Reading from the N-terminus, the 399-residue chain is Phosphomevalonate dehydratase large subunit (399 aa).

5 residues coordinate (R)-5-phosphomevalonate: Gly54, Val55, Ser56, Asn85, and Pro86. Cys125 contacts [4Fe-4S] cluster. Glu144 and Ser145 together coordinate (R)-5-phosphomevalonate. Positions 298 and 355 each coordinate [4Fe-4S] cluster. Lys375 is a binding site for (R)-5-phosphomevalonate.

The protein belongs to the AcnX type II large subunit family. As to quaternary structure, heterodimer composed of a large subunit (PMDh-L) and a small subunit (PMDh-S). [4Fe-4S] cluster serves as cofactor.

The enzyme catalyses (R)-5-phosphomevalonate = (2E)-3-methyl-5-phosphooxypent-2-enoate + H2O. The protein operates within isoprenoid biosynthesis; isopentenyl diphosphate biosynthesis via mevalonate pathway. Component of a hydro-lyase that catalyzes the dehydration of mevalonate 5-phosphate (MVA5P) to form trans-anhydromevalonate 5-phosphate (tAHMP). Involved in the archaeal mevalonate (MVA) pathway, which provides fundamental precursors for isoprenoid biosynthesis, such as isopentenyl diphosphate (IPP) and dimethylallyl diphosphate (DMAPP). The polypeptide is Phosphomevalonate dehydratase large subunit (Methanothermobacter thermautotrophicus (strain ATCC 29096 / DSM 1053 / JCM 10044 / NBRC 100330 / Delta H) (Methanobacterium thermoautotrophicum)).